A 123-amino-acid polypeptide reads, in one-letter code: Large ribosomal subunit protein uL29 (123 aa).

This sequence belongs to the universal ribosomal protein uL29 family.

This chain is Large ribosomal subunit protein uL29 (RPL35), found in Theileria lestoquardi.